A 270-amino-acid polypeptide reads, in one-letter code: tRNA pseudouridine synthase A (270 aa).

Catalysis depends on Asp-60, which acts as the Nucleophile. The segment at 107–111 is RNA binding; sequence FHARF. Position 118 (Tyr-118) interacts with substrate. Positions 168–172 are interaction with tRNA; it reads QCQSR.

It belongs to the tRNA pseudouridine synthase TruA family. In terms of assembly, homodimer.

The catalysed reaction is uridine(38/39/40) in tRNA = pseudouridine(38/39/40) in tRNA. In terms of biological role, formation of pseudouridine at positions 38, 39 and 40 in the anticodon stem and loop of transfer RNAs. In Escherichia coli O9:H4 (strain HS), this protein is tRNA pseudouridine synthase A.